A 368-amino-acid polypeptide reads, in one-letter code: Aminomethyltransferase (368 aa).

This sequence belongs to the GcvT family. As to quaternary structure, the glycine cleavage system is composed of four proteins: P, T, L and H.

The enzyme catalyses N(6)-[(R)-S(8)-aminomethyldihydrolipoyl]-L-lysyl-[protein] + (6S)-5,6,7,8-tetrahydrofolate = N(6)-[(R)-dihydrolipoyl]-L-lysyl-[protein] + (6R)-5,10-methylene-5,6,7,8-tetrahydrofolate + NH4(+). Its function is as follows. The glycine cleavage system catalyzes the degradation of glycine. The chain is Aminomethyltransferase from Alkaliphilus oremlandii (strain OhILAs) (Clostridium oremlandii (strain OhILAs)).